The primary structure comprises 29 residues: Cyclotide mang-A (29 aa).

The segment at residues G1 to D29 is a cross-link (cyclopeptide (Gly-Asp)). 3 cysteine pairs are disulfide-bonded: C5–C19, C9–C21, and C14–C26.

The protein belongs to the cyclotide family. Moebius subfamily. Post-translationally, this is a cyclic peptide.

Functionally, probably participates in a plant defense mechanism. The sequence is that of Cyclotide mang-A from Melicytus angustifolius (Hymenanthera angustifolia).